The primary structure comprises 216 residues: Thymidylate kinase (216 aa).

10 to 17 (GVDGSGKT) is an ATP binding site.

The protein belongs to the thymidylate kinase family.

The enzyme catalyses dTMP + ATP = dTDP + ADP. In terms of biological role, phosphorylation of dTMP to form dTDP in both de novo and salvage pathways of dTTP synthesis. The sequence is that of Thymidylate kinase from Pelotomaculum thermopropionicum (strain DSM 13744 / JCM 10971 / SI).